The sequence spans 539 residues: Beta-agarase A (539 aa).

Residues 1-19 (MKKNYLLLYFIFLLCGSIA) form the signal peptide. Residues 21–289 (QDWNGIPVPA…WIRVYKPVAV (269 aa)) enclose the GH16 domain. Residues Trp73, 82–92 (NAPQAWTNGSQ), 96–98 (QAQ), and Glu144 each bind substrate. The active-site Nucleophile is the Glu147. The active-site Proton donor is the Glu152. Arg176 and Asp271 together coordinate substrate. Residues 332–353 (WANTNDIGSRDRGASNGRNNIN) form a disordered region.

Belongs to the glycosyl hydrolase 16 family. As to quaternary structure, monomer. Proteolytically cleaved into mature beta-agarase A catalytic chain (AgaAc).

It is found in the secreted. The enzyme catalyses Hydrolysis of (1-&gt;4)-beta-D-galactosidic linkages in agarose, giving the tetramer as the predominant product.. In terms of biological role, cleaves the beta-1,4-linkages between beta-D-galactose and alpha-L-3,6-anhydro-galactose residues in agarose. Cleaves agarose in a random manner with retention of the anomeric-bond configuration, producing beta-anomers that give rise progressively to alpha-anomers when mutarotation takes place. This is Beta-agarase A (agaA) from Zobellia galactanivorans (strain DSM 12802 / CCUG 47099 / CIP 106680 / NCIMB 13871 / Dsij).